The sequence spans 175 residues: MSIDFKKYIASVKDFPNEGIIFRDITPILQDGEAFAAATHEIAEYAKSRQADVIVGPEARGFLVGTPVAIELGIGFVPARKPHKLPREVEAAAYDLEYGSNVLEMHKDAIKPGQRVVICDDLMATAGTMHATKELIERLGGKVVGAAFYIELTDLKGREKFPDVDIFSLVQYTGA.

This sequence belongs to the purine/pyrimidine phosphoribosyltransferase family. Homodimer.

The protein resides in the cytoplasm. It carries out the reaction AMP + diphosphate = 5-phospho-alpha-D-ribose 1-diphosphate + adenine. It functions in the pathway purine metabolism; AMP biosynthesis via salvage pathway; AMP from adenine: step 1/1. In terms of biological role, catalyzes a salvage reaction resulting in the formation of AMP, that is energically less costly than de novo synthesis. This Lactobacillus delbrueckii subsp. bulgaricus (strain ATCC 11842 / DSM 20081 / BCRC 10696 / JCM 1002 / NBRC 13953 / NCIMB 11778 / NCTC 12712 / WDCM 00102 / Lb 14) protein is Adenine phosphoribosyltransferase.